An 833-amino-acid chain; its full sequence is Leucine--tRNA ligase (833 aa).

The 'HIGH' region motif lies at 41–52; sequence PYPSGAGLHVGH. Positions 610–614 match the 'KMSKS' region motif; sequence KMSKS. K613 is a binding site for ATP.

Belongs to the class-I aminoacyl-tRNA synthetase family.

It localises to the cytoplasm. The catalysed reaction is tRNA(Leu) + L-leucine + ATP = L-leucyl-tRNA(Leu) + AMP + diphosphate. The sequence is that of Leucine--tRNA ligase from Streptococcus agalactiae serotype III (strain NEM316).